The chain runs to 86 residues: Exodeoxyribonuclease 7 small subunit (86 aa).

The tract at residues 1 to 26 (MQDELFETEKAPQKNAKNAKNAPKKS) is disordered.

This sequence belongs to the XseB family. In terms of assembly, heterooligomer composed of large and small subunits.

Its subcellular location is the cytoplasm. It catalyses the reaction Exonucleolytic cleavage in either 5'- to 3'- or 3'- to 5'-direction to yield nucleoside 5'-phosphates.. Bidirectionally degrades single-stranded DNA into large acid-insoluble oligonucleotides, which are then degraded further into small acid-soluble oligonucleotides. The sequence is that of Exodeoxyribonuclease 7 small subunit from Helicobacter pylori (strain J99 / ATCC 700824) (Campylobacter pylori J99).